The sequence spans 72 residues: Teretoxin Tan11.1 (72 aa).

The first 21 residues, 1-21, serve as a signal peptide directing secretion; the sequence is MLATKMSVTFCFLLMLTTVML. Positions 22–31 are excised as a propeptide; it reads PTEAKTVAGR.

It belongs to the teretoxin H (TH) superfamily. Post-translationally, contains 4 disulfide bonds. As to expression, expressed by the venom duct.

It is found in the secreted. This is Teretoxin Tan11.1 from Terebra anilis (Auger snail).